We begin with the raw amino-acid sequence, 355 residues long: NADH dehydrogenase-like protein YutJ (355 aa).

It belongs to the NADH dehydrogenase family. The cofactor is FAD.

This Bacillus subtilis (strain 168) protein is NADH dehydrogenase-like protein YutJ (yutJ).